A 589-amino-acid chain; its full sequence is ATP-dependent lipid A-core flippase (589 aa).

Helical transmembrane passes span 29–49 (LLLV…TGFL), 70–90 (WLPV…YITD), 157–177 (VIGA…TILV), 261–281 (MIGA…ALAG), and 283–303 (LTAG…PGLK). The ABC transmembrane type-1 domain occupies 32 to 314 (VAALIAALIE…LTNVQNMVQR (283 aa)). The region spanning 346–582 (IEFRDVTARY…GGLYSHLHGM (237 aa)) is the ABC transporter domain. Residue 380-387 (GRSGSGKS) coordinates ATP.

The protein belongs to the ABC transporter superfamily. Lipid exporter (TC 3.A.1.106) family. Homodimer.

Its subcellular location is the cell inner membrane. The enzyme catalyses ATP + H2O + lipid A-core oligosaccharideSide 1 = ADP + phosphate + lipid A-core oligosaccharideSide 2.. Functionally, involved in lipopolysaccharide (LPS) biosynthesis. Translocates lipid A-core from the inner to the outer leaflet of the inner membrane. Transmembrane domains (TMD) form a pore in the inner membrane and the ATP-binding domain (NBD) is responsible for energy generation. The sequence is that of ATP-dependent lipid A-core flippase from Xanthomonas axonopodis pv. citri (strain 306).